Reading from the N-terminus, the 238-residue chain is Protein shisa-3 homolog (238 aa).

Positions Met-1–Ala-21 are cleaved as a signal peptide. The Lumenal segment spans residues Gln-22–Pro-98. A helical transmembrane segment spans residues Phe-99–Tyr-119. The Cytoplasmic portion of the chain corresponds to Cys-120–Ser-238.

Belongs to the shisa family.

The protein localises to the endoplasmic reticulum membrane. Functionally, plays an essential role in the maturation of presomitic mesoderm cells by individual attenuation of both FGF and WNT signaling. The protein is Protein shisa-3 homolog (Shisa3) of Mus musculus (Mouse).